We begin with the raw amino-acid sequence, 117 residues long: Large ribosomal subunit protein bL20c (117 aa).

The protein belongs to the bacterial ribosomal protein bL20 family.

Its subcellular location is the plastid. The protein localises to the chloroplast. Its function is as follows. Binds directly to 23S ribosomal RNA and is necessary for the in vitro assembly process of the 50S ribosomal subunit. It is not involved in the protein synthesizing functions of that subunit. The polypeptide is Large ribosomal subunit protein bL20c (Arabis hirsuta (Hairy rock-cress)).